A 213-amino-acid chain; its full sequence is MTYQLPELGYAYDALEPYFDKETMEIHHSKHHQAYVNNSNALLEKHPELLEKCPGALLKDLTQVPAEKRTAVRNNLGGHVNHTLFWKGLKTGTTLQGALKDAIIRDFGSVEAFQAEFEQAAATRFGSGWAWLVLEEGKLAVVSTANQDSPIMGKDVAGVSGYPIFTLDVWEHAYYLHYQNRRPDYIKAFWNVVNWDEASRRFEEKQAGCGCTK.

His27, His82, Asp168, and His172 together coordinate Mn(2+).

Belongs to the iron/manganese superoxide dismutase family. In terms of assembly, homodimer.

The catalysed reaction is 2 superoxide + 2 H(+) = H2O2 + O2. Its activity is regulated as follows. Inhibited by hydrogen peroxide. Its function is as follows. Destroys superoxide anion radicals which are normally produced within the cells and which are toxic to biological systems. The protein is Superoxide dismutase [Mn] (sodA) of Haemophilus ducreyi (strain 35000HP / ATCC 700724).